The following is a 395-amino-acid chain: Imidazolonepropionase (395 aa).

Positions 63 and 65 each coordinate Fe(3+). Positions 63 and 65 each coordinate Zn(2+). 4-imidazolone-5-propanoate is bound by residues R72, Y135, and H168. Y135 lines the N-formimidoyl-L-glutamate pocket. Residue H233 participates in Fe(3+) binding. Zn(2+) is bound at residue H233. Position 236 (Q236) interacts with 4-imidazolone-5-propanoate. D308 provides a ligand contact to Fe(3+). D308 serves as a coordination point for Zn(2+). Positions 310 and 312 each coordinate N-formimidoyl-L-glutamate. T313 contacts 4-imidazolone-5-propanoate.

Belongs to the metallo-dependent hydrolases superfamily. HutI family. The cofactor is Zn(2+). It depends on Fe(3+) as a cofactor.

The protein resides in the cytoplasm. It catalyses the reaction 4-imidazolone-5-propanoate + H2O = N-formimidoyl-L-glutamate. The protein operates within amino-acid degradation; L-histidine degradation into L-glutamate; N-formimidoyl-L-glutamate from L-histidine: step 3/3. Functionally, catalyzes the hydrolytic cleavage of the carbon-nitrogen bond in imidazolone-5-propanoate to yield N-formimidoyl-L-glutamate. It is the third step in the universal histidine degradation pathway. The protein is Imidazolonepropionase of Cereibacter sphaeroides (strain ATCC 17023 / DSM 158 / JCM 6121 / CCUG 31486 / LMG 2827 / NBRC 12203 / NCIMB 8253 / ATH 2.4.1.) (Rhodobacter sphaeroides).